Here is a 292-residue protein sequence, read N- to C-terminus: Protease HtpX (292 aa).

Transmembrane regions (helical) follow at residues 4–24 and 32–52; these read IILF…ILAV and IYGL…LSLI. His-139 lines the Zn(2+) pocket. Glu-140 is an active-site residue. His-143 is a Zn(2+) binding site. 2 consecutive transmembrane segments (helical) span residues 150 to 170 and 193 to 213; these read ITMT…SRII and FLFF…ASII. Glu-222 contacts Zn(2+).

It belongs to the peptidase M48B family. Zn(2+) is required as a cofactor.

It localises to the cell membrane. The polypeptide is Protease HtpX (Buchnera aphidicola subsp. Schizaphis graminum (strain Sg)).